Reading from the N-terminus, the 300-residue chain is Cation-efflux pump FieF (300 aa).

Transmembrane regions (helical) follow at residues 12–32, 39–59, 82–102, and 114–134; these read AAIA…FAWW, ILAA…NLLV, AALA…LTGI, and PGVG…LVSF. The Zn(2+) site is built by Asp45 and Asp49. His153 and Asp157 together coordinate Zn(2+). The next 2 helical transmembrane spans lie at 156 to 176 and 178 to 198; these read SDVM…YGWH and ADAL…LRMG.

This sequence belongs to the cation diffusion facilitator (CDF) transporter (TC 2.A.4) family. FieF subfamily. In terms of assembly, homodimer.

Its subcellular location is the cell inner membrane. The catalysed reaction is Zn(2+)(in) + H(+)(out) = Zn(2+)(out) + H(+)(in). It catalyses the reaction Cd(2+)(in) + H(+)(out) = Cd(2+)(out) + H(+)(in). The enzyme catalyses Fe(2+)(in) + H(+)(out) = Fe(2+)(out) + H(+)(in). Functionally, divalent metal cation transporter which exports Zn(2+), Cd(2+) and possibly Fe(2+). May be involved in zinc and iron detoxification by efflux. The protein is Cation-efflux pump FieF of Shigella flexneri serotype 5b (strain 8401).